The primary structure comprises 426 residues: 3',5'-cyclic-nucleotide phosphodiesterase (426 aa).

The tract at residues 210-229 (DKEDAQHHSNSNSNSNNIWG) is disordered.

This sequence belongs to the cyclic nucleotide phosphodiesterase class-II family.

The catalysed reaction is a nucleoside 3',5'-cyclic phosphate + H2O = a nucleoside 5'-phosphate + H(+). The polypeptide is 3',5'-cyclic-nucleotide phosphodiesterase (PDE1) (Candida albicans (Yeast)).